The following is a 497-amino-acid chain: FAD-linked oxidoreductase fogF (497 aa).

A signal peptide spans 1-18; that stretch reads MRRNILTALACSWLTAHA. Residues 59-229 enclose the FAD-binding PCMH-type domain; sequence NAPTYAGAIS…TSATYKLHKL (171 aa).

This sequence belongs to the oxygen-dependent FAD-linked oxidoreductase family. It depends on FAD as a cofactor.

Its pathway is secondary metabolite biosynthesis. Functionally, FAD-linked oxidoreductase; part of the gene cluster that mediates the biosynthesis of flavoglaucin and congeners (including aspergin, dihydroauroglaucin and auroglaucin), prenylated salicylaldehyde derivatives carrying a saturated or an unsaturated C-7 side chain. The PKS fogA releases the carboxylic acid (8E,10E,12E)-3,5,7-trihydroxytetradeca-8,10,12-trienoic acid as its product, as well as derivatives with one and two double bonds. FogA is indeed able to reduce the initial triketide, thus being at least partially responsible for the differently saturated heptyl side chains of flavoglaucin congeners. The oxidoreductases fogB, fogC and fogD modify the nascent polyketide in fogA-bound form and, together, fogA, fogB, fogC and fogD are necessary for the formation of the aromatic core and the cyclized PKS products are released as salicyl alcohols. In particular, fogB is responsible for oxidation of a hydroxyl group or reduction of remaining double bond(s) at the C-7 residue whereas fogD is probably involved in the reductive release of the modified PKS products. The cytochrome P450 monooxygenase fogE is then responsible for the hydroxylation at C-3 of the benzene ring. The fogE products are substrates of the prenyltransferase fogH and the prenylated benzyl alcohols are subsequently oxidized by the fogF to produce the final aryl aldehydes flavoglaucin and congeners. The short-chain dehydrogenase fogG does not seem to be involved in the biosynthesis of the prenylated salicylaldehyde derivatives. This is FAD-linked oxidoreductase fogF from Aspergillus ruber (strain CBS 135680).